The following is a 206-amino-acid chain: Large ribosomal subunit protein uL4 (206 aa).

The tract at residues 60 to 84 is disordered; the sequence is TAKPFKQKGTGHARQGSKRSPQFRG. Over residues 64-76 the composition is skewed to basic residues; it reads FKQKGTGHARQGS.

The protein belongs to the universal ribosomal protein uL4 family. As to quaternary structure, part of the 50S ribosomal subunit.

In terms of biological role, one of the primary rRNA binding proteins, this protein initially binds near the 5'-end of the 23S rRNA. It is important during the early stages of 50S assembly. It makes multiple contacts with different domains of the 23S rRNA in the assembled 50S subunit and ribosome. Forms part of the polypeptide exit tunnel. The polypeptide is Large ribosomal subunit protein uL4 (Rhodospirillum rubrum (strain ATCC 11170 / ATH 1.1.1 / DSM 467 / LMG 4362 / NCIMB 8255 / S1)).